Reading from the N-terminus, the 749-residue chain is Cytosolic phospholipase A2 (749 aa).

The phospholipid binding stretch occupies residues 1–178 (MSFIDPYQHI…MKKLLGPKNS (178 aa)). A Phosphoserine modification is found at serine 2. The C2 domain occupies 6 to 122 (PYQHIIVEHH…KVGEKKQVPF (117 aa)). Aspartate 40, threonine 41, aspartate 43, asparagine 65, aspartate 93, alanine 94, and asparagine 95 together coordinate Ca(2+). The PLA2c domain occupies 140 to 740 (SSPDLRFSMA…SSVEARRFFN (601 aa)). Serine 228 functions as the Nucleophile in the catalytic mechanism. Threonine 268 is modified (phosphothreonine). The segment at 426–458 (AKHIVSNDSSDSDDESQGPKGTEHEEAEREYQN) is disordered. A phosphoserine mark is found at serine 434, serine 435, and serine 437. Residues 446 to 457 (GTEHEEAEREYQ) show a composition bias toward basic and acidic residues. Position 505 is a phosphoserine; by MAPK (serine 505). Serine 515 bears the Phosphoserine mark. Residue lysine 541 forms a Glycyl lysine isopeptide (Lys-Gly) (interchain with G-Cter in SUMO2) linkage. The active-site Proton acceptor is aspartate 549. Lysine 606 participates in a covalent cross-link: Glycyl lysine isopeptide (Lys-Gly) (interchain with G-Cter in SUMO2). Serine 727 and serine 729 each carry phosphoserine.

Interacts with KAT5. In terms of processing, phosphorylated at both Ser-505 and Ser-727 in response to mitogenic stimuli. In terms of tissue distribution, detected in granulosa cells after stimulation with chorionic gonadotropin (at protein level).

It localises to the cytoplasm. The protein localises to the golgi apparatus membrane. The protein resides in the nucleus envelope. It carries out the reaction a 1,2-diacyl-sn-glycero-3-phosphocholine + H2O = a 1-acyl-sn-glycero-3-phosphocholine + a fatty acid + H(+). The catalysed reaction is a 1-O-alkyl-2-acyl-sn-glycero-3-phosphocholine + H2O = a 1-O-alkyl-sn-glycero-3-phosphocholine + a fatty acid + H(+). The enzyme catalyses a 1-acyl-sn-glycero-3-phosphocholine + H2O = sn-glycerol 3-phosphocholine + a fatty acid + H(+). It catalyses the reaction 1-hexadecanoyl-2-(5Z,8Z,11Z,14Z-eicosatetraenoyl)-sn-glycero-3-phosphocholine + H2O = 1-hexadecanoyl-sn-glycero-3-phosphocholine + (5Z,8Z,11Z,14Z)-eicosatetraenoate + H(+). It carries out the reaction 1,2-di-(5Z,8Z,11Z,14Z-eicosatetraenoyl)-sn-glycero-3-phosphocholine + H2O = 1-(5Z,8Z,11Z,14Z-eicosatetraenoyl)-sn-glycero-3-phosphocholine + (5Z,8Z,11Z,14Z)-eicosatetraenoate + H(+). The catalysed reaction is 1-octadecanoyl-2-(5Z,8Z,11Z,14Z-eicosatetraenoyl)-sn-glycero-3-phosphocholine + H2O = 1-octadecanoyl-sn-glycero-3-phosphocholine + (5Z,8Z,11Z,14Z)-eicosatetraenoate + H(+). The enzyme catalyses 1-hexadecanoyl-2-(9Z,12Z-octadecadienoyl)-sn-glycero-3-phosphocholine + H2O = (9Z,12Z)-octadecadienoate + 1-hexadecanoyl-sn-glycero-3-phosphocholine + H(+). It catalyses the reaction 1-octadecanoyl-2-(9Z,12Z,15Z-octadecatrienoyl)-sn-glycero-3-phosphocholine + H2O = (9Z,12Z,15Z)-octadecatrienoate + 1-octadecanoyl-sn-glycero-3-phosphocholine + H(+). It carries out the reaction 1-(5Z,8Z,11Z,14Z-eicosatetraenoyl)-2-hexadecanoyl-sn-glycero-3-phosphocholine + H2O = 1-(5Z,8Z,11Z,14Z-eicosatetraenoyl)-sn-glycero-3-phosphocholine + hexadecanoate + H(+). The catalysed reaction is 1-O-hexadecyl-2-(5Z,8Z,11Z,14Z)-eicosatetraenoyl-sn-glycero-3-phosphocholine + H2O = 1-O-hexadecyl-sn-glycero-3-phosphocholine + (5Z,8Z,11Z,14Z)-eicosatetraenoate + H(+). The enzyme catalyses 1,2-di-(9Z-octadecenoyl)-sn-glycero-3-phospho-(1'-sn-glycerol) + H2O = 1-(9Z-octadecenoyl)-sn-glycero-3-phospho-(1'-sn-glycerol) + (9Z)-octadecenoate + H(+). It catalyses the reaction 1-octadecanoyl-2-(5Z,8Z,11Z,14Z-eicosatetraenoyl)-sn-glycero-3-phosphate + H2O = 1-octadecanoyl-sn-glycero-3-phosphate + (5Z,8Z,11Z,14Z)-eicosatetraenoate + H(+). It carries out the reaction 1-hexadecanoyl-sn-glycero-3-phosphocholine + H2O = sn-glycerol 3-phosphocholine + hexadecanoate + H(+). The catalysed reaction is 2-(prostaglandin E2)-sn-glycero-3-phosphoethanolamine + H2O = sn-glycero-3-phosphoethanolamine + prostaglandin E2 + H(+). The enzyme catalyses 2-[(15S)-hydroxy-(5Z,8Z,11Z,13E)-eicosatetraenoyl]-sn-glycero-3-phosphocholine + H2O = (15S)-hydroxy-(5Z,8Z,11Z,13E)-eicosatetraenoate + sn-glycerol 3-phosphocholine + H(+). It catalyses the reaction 2-[(15R)-hydroxy-(5Z,8Z,11Z,13E)-eicosatetraenoyl]-sn-glycero-3-phosphocholine + H2O = (15R)-hydroxy-(5Z,8Z,11Z,13E)-eicosatetraenoate + sn-glycerol 3-phosphocholine + H(+). It carries out the reaction 2-(prostaglandin E2)-sn-glycero-3-phosphocholine + H2O = prostaglandin E2 + sn-glycerol 3-phosphocholine + H(+). The catalysed reaction is 2-[(11R)-hydroxy-(5Z,8Z,12E,14Z)-eicosatetraenoyl]-sn-glycero-3-phosphocholine + H2O = (11R)-hydroxy-(5Z,8Z,12E,14Z)-eicosatetraenoate + sn-glycerol 3-phosphocholine + H(+). The enzyme catalyses 1-(5Z,8Z,11Z,14Z-eicosatetraenoyl)-2-O-hexadecyl-sn-glycero-3-phosphocholine + H2O = 2-O-hexadecyl-sn-glycero-3-phosphocholine + (5Z,8Z,11Z,14Z)-eicosatetraenoate + H(+). It catalyses the reaction 1-octadecanoyl-2-(5Z,8Z,11Z,14Z-eicosatetraenoyl)-sn-glycero-3-phosphocholine + glycerol = 1-(5Z,8Z,11Z,14Z-eicosatetraenoyl)-glycerol + 1-octadecanoyl-sn-glycero-3-phosphocholine. It carries out the reaction 1-octadecanoyl-2-(9Z,12Z,15Z-octadecatrienoyl)-sn-glycero-3-phosphocholine + glycerol = 1-(9Z,12Z,15Z-octadecatrienoyl)-glycerol + 1-octadecanoyl-sn-glycero-3-phosphocholine. The protein operates within membrane lipid metabolism; glycerophospholipid metabolism. It participates in lipid metabolism; arachidonate metabolism. It functions in the pathway lipid metabolism; prostaglandin biosynthesis. Its pathway is lipid metabolism; leukotriene B4 biosynthesis. Activated by cytosolic calcium, which is necessary for binding to membrane lipids. Activated by phosphorylation in response to mitogenic stimuli. In terms of biological role, has primarily calcium-dependent phospholipase and lysophospholipase activities, with a major role in membrane lipid remodeling and biosynthesis of lipid mediators of the inflammatory response. Plays an important role in embryo implantation and parturition through its ability to trigger prostanoid production. Preferentially hydrolyzes the ester bond of the fatty acyl group attached at sn-2 position of phospholipids (phospholipase A2 activity). Selectively hydrolyzes sn-2 arachidonoyl group from membrane phospholipids, providing the precursor for eicosanoid biosynthesis via the cyclooxygenase pathway. In an alternative pathway of eicosanoid biosynthesis, hydrolyzes sn-2 fatty acyl chain of eicosanoid lysophopholipids to release free bioactive eicosanoids. Hydrolyzes the ester bond of the fatty acyl group attached at sn-1 position of phospholipids (phospholipase A1 activity) only if an ether linkage rather than an ester linkage is present at the sn-2 position. This hydrolysis is not stereospecific. Has calcium-independent phospholipase A2 and lysophospholipase activities in the presence of phosphoinositides. Has O-acyltransferase activity. Catalyzes the transfer of fatty acyl chains from phospholipids to a primary hydroxyl group of glycerol (sn-1 or sn-3), potentially contributing to monoacylglycerol synthesis. The chain is Cytosolic phospholipase A2 (PLA2G4A) from Bos taurus (Bovine).